Here is a 149-residue protein sequence, read N- to C-terminus: Ribonuclease H (149 aa).

The region spanning 1–142 is the RNase H type-1 domain; it reads MSTITIHTDG…ADELAREGLA (142 aa). Mg(2+)-binding residues include aspartate 9, glutamate 47, aspartate 70, and aspartate 134. Residues 124–149 form a disordered region; it reads HAGDPGNERADELAREGLAEARGRQP. Positions 129–149 are enriched in basic and acidic residues; it reads GNERADELAREGLAEARGRQP.

The protein belongs to the RNase H family. As to quaternary structure, monomer. The cofactor is Mg(2+).

The protein localises to the cytoplasm. It carries out the reaction Endonucleolytic cleavage to 5'-phosphomonoester.. Functionally, endonuclease that specifically degrades the RNA of RNA-DNA hybrids. This chain is Ribonuclease H, found in Maricaulis maris (strain MCS10) (Caulobacter maris).